A 146-amino-acid chain; its full sequence is Hemoglobin subunit beta-2 (146 aa).

The Globin domain occupies 2–146 (EWTDFERATI…VVSSLGRQYH (145 aa)). Heme b-binding residues include His-63 and His-92.

The protein belongs to the globin family. Hb2 is a heterotetramer of two alpha chains and two beta-2 chains. Red blood cells.

Involved in oxygen transport from gills to the various peripheral tissues. In Pseudaphritis urvillii (Congolli), this protein is Hemoglobin subunit beta-2 (hbb2).